The chain runs to 409 residues: Lissencephaly-1 homolog (409 aa).

The 33-residue stretch at 7-39 folds into the LisH domain; the sequence is RRERSNQAIADYLGSNGYTDALEAFRKEADMPN. A coiled-coil region spans residues 54–81; sequence TSVIRLQKKVMELEAKLSEAEKEAIEGA. WD repeat units lie at residues 104 to 145, 146 to 185, 189 to 228, 231 to 270, 273 to 332, 335 to 374, and 377 to 409; these read GHRA…RTLK, GHTD…ECVK, GHDH…CVKT, GHRE…CKAE, EHEN…CLFT, GHDN…CMKT, and AHSH…WECR.

Belongs to the WD repeat LIS1/nudF family.

The protein localises to the cytoplasm. The protein resides in the cytoskeleton. It localises to the microtubule organizing center. It is found in the centrosome. Its function is as follows. Positively regulates the activity of the minus-end directed microtubule motor protein dynein. May enhance dynein-mediated microtubule sliding by targeting dynein to the microtubule plus end. Required for several dynein- and microtubule-dependent processes. This Aedes aegypti (Yellowfever mosquito) protein is Lissencephaly-1 homolog.